The sequence spans 448 residues: Trigger factor (448 aa).

The PPIase FKBP-type domain occupies 160-245; the sequence is GDMLLMKVES…IQEIREEKLP (86 aa).

The protein belongs to the FKBP-type PPIase family. Tig subfamily.

The protein resides in the cytoplasm. The catalysed reaction is [protein]-peptidylproline (omega=180) = [protein]-peptidylproline (omega=0). Its function is as follows. Involved in protein export. Acts as a chaperone by maintaining the newly synthesized protein in an open conformation. Functions as a peptidyl-prolyl cis-trans isomerase. The polypeptide is Trigger factor (Dehalococcoides mccartyi (strain ATCC BAA-2266 / KCTC 15142 / 195) (Dehalococcoides ethenogenes (strain 195))).